The following is a 174-amino-acid chain: Nucleoside-triphosphatase THEP1 (174 aa).

Residues 15 to 22 (GMPGVGKT) and 102 to 109 (LAIVDEIG) contribute to the ATP site.

The protein belongs to the THEP1 NTPase family.

It carries out the reaction a ribonucleoside 5'-triphosphate + H2O = a ribonucleoside 5'-diphosphate + phosphate + H(+). Its function is as follows. Has nucleotide phosphatase activity towards ATP, GTP, CTP, TTP and UTP. May hydrolyze nucleoside diphosphates with lower efficiency. The protein is Nucleoside-triphosphatase THEP1 of Pyrobaculum islandicum (strain DSM 4184 / JCM 9189 / GEO3).